Consider the following 212-residue polypeptide: uncharacterized protein (212 aa).

A helical membrane pass occupies residues 5–25; it reads IFIILIAVLLIGVNIKKIAAA.

It is found in the membrane. This is an uncharacterized protein from Borreliella burgdorferi (strain ATCC 35210 / DSM 4680 / CIP 102532 / B31) (Borrelia burgdorferi).